We begin with the raw amino-acid sequence, 259 residues long: Indole-3-glycerol phosphate synthase (259 aa).

The protein belongs to the TrpC family.

The enzyme catalyses 1-(2-carboxyphenylamino)-1-deoxy-D-ribulose 5-phosphate + H(+) = (1S,2R)-1-C-(indol-3-yl)glycerol 3-phosphate + CO2 + H2O. It functions in the pathway amino-acid biosynthesis; L-tryptophan biosynthesis; L-tryptophan from chorismate: step 4/5. The chain is Indole-3-glycerol phosphate synthase from Dehalococcoides mccartyi (strain CBDB1).